Here is a 565-residue protein sequence, read N- to C-terminus: Receptor-like serine/threonine-protein kinase NCRK (565 aa).

The N-terminal stretch at 1–23 (MKMRVETALAILLVLISIQQCYG) is a signal peptide. Residues 24-103 (GVSNYTCTCF…SKKQYLSRKL (80 aa)) are Extracellular-facing. N-linked (GlcNAc...) asparagine glycans are attached at residues N27, N37, N45, N77, and N85. Residues 104–124 (VIVILLFCGVLISLAFLASMI) traverse the membrane as a helical segment. At 125 to 565 (CYICRKDKFS…PVLLEPSAHI (441 aa)) the chain is on the cytoplasmic side. One can recognise a Protein kinase domain in the interval 210–495 (FSSNSVIGHG…REVVQILSTI (286 aa)). ATP-binding positions include 216-224 (IGHGGSSCV) and K238. D339 functions as the Proton acceptor in the catalytic mechanism. T378 and T383 each carry phosphothreonine. Residue Y391 is modified to Phosphotyrosine.

Belongs to the protein kinase superfamily. Ser/Thr protein kinase family. Interacts with ARAC5. Post-translationally, phosphorylated. Mostly expressed in leaf primordia, root and shoot apical meristems, lateral root primordia, and stele of older roots and hypocotyls. In leaves and cotyledons, highest levels observed in trichomes, vasculatures, and hydathode endothem.

Its subcellular location is the cell membrane. It localises to the prevacuolar compartment membrane. It is found in the endosome. It carries out the reaction L-seryl-[protein] + ATP = O-phospho-L-seryl-[protein] + ADP + H(+). The enzyme catalyses L-threonyl-[protein] + ATP = O-phospho-L-threonyl-[protein] + ADP + H(+). The protein is Receptor-like serine/threonine-protein kinase NCRK (NCRK) of Arabidopsis thaliana (Mouse-ear cress).